Here is a 121-residue protein sequence, read N- to C-terminus: Basic phospholipase A2 VRV-PL-VIIIa (121 aa).

Intrachain disulfides connect C26–C115, C28–C44, C43–C95, C49–C121, C50–C88, C57–C81, and C75–C86. Y27, G29, and G31 together coordinate Ca(2+). H47 is a catalytic residue. D48 contacts Ca(2+). D89 is an active-site residue.

The protein belongs to the phospholipase A2 family. Group II subfamily. D49 sub-subfamily. In terms of assembly, monomer. Ca(2+) is required as a cofactor. In terms of tissue distribution, expressed by the venom gland.

Its subcellular location is the secreted. It carries out the reaction a 1,2-diacyl-sn-glycero-3-phosphocholine + H2O = a 1-acyl-sn-glycero-3-phosphocholine + a fatty acid + H(+). Its activity is regulated as follows. Oxyphenbutazone (OPB), anisic acid and atropine inhibit the enzymatic activity by binding at the substrate-binding site. P-coumaric acid, resveratrol, spermidine, corticosterone and gramine derivative inhibit the enzymatic activity by binding at the substrate-binding site. In terms of biological role, snake venom phospholipase A2 (PLA2) that shows weak neurotoxicity and medium anticoagulant effects by binding to factor Xa (F10) and inhibiting the prothrombinase activity (IC(50) is 130 nM). It also damages vital organs such as lung, liver and kidney, displays edema-inducing activities when injected into the foot pads of mice and induces necrosis of muscle cells when injected into the thigh muscle. Has a low enzymatic activity. PLA2 catalyzes the calcium-dependent hydrolysis of the 2-acyl groups in 3-sn-phosphoglycerides. This is Basic phospholipase A2 VRV-PL-VIIIa from Daboia russelii (Russel's viper).